Here is a 150-residue protein sequence, read N- to C-terminus: Large ribosomal subunit protein bL9 (150 aa).

This sequence belongs to the bacterial ribosomal protein bL9 family.

In terms of biological role, binds to the 23S rRNA. This chain is Large ribosomal subunit protein bL9, found in Leuconostoc citreum (strain KM20).